A 358-amino-acid polypeptide reads, in one-letter code: NADH-quinone oxidoreductase subunit H (358 aa).

8 consecutive transmembrane segments (helical) span residues 20-40 (ITVG…IPLI), 95-115 (ALFY…WAVI), 128-148 (IGLL…IIAG), 168-188 (ISYE…SGSM), 206-226 (VFSW…ISAV), 253-273 (GFAF…IAAL), 295-315 (TPSA…YLWI), and 334-354 (VLIP…ISPL).

It belongs to the complex I subunit 1 family. NDH-1 is composed of 14 different subunits. Subunits NuoA, H, J, K, L, M, N constitute the membrane sector of the complex.

Its subcellular location is the cell inner membrane. It carries out the reaction a quinone + NADH + 5 H(+)(in) = a quinol + NAD(+) + 4 H(+)(out). In terms of biological role, NDH-1 shuttles electrons from NADH, via FMN and iron-sulfur (Fe-S) centers, to quinones in the respiratory chain. The immediate electron acceptor for the enzyme in this species is believed to be ubiquinone. Couples the redox reaction to proton translocation (for every two electrons transferred, four hydrogen ions are translocated across the cytoplasmic membrane), and thus conserves the redox energy in a proton gradient. This subunit may bind ubiquinone. The sequence is that of NADH-quinone oxidoreductase subunit H from Neisseria meningitidis serogroup B (strain ATCC BAA-335 / MC58).